Consider the following 222-residue polypeptide: CCA-adding enzyme (222 aa).

ATP-binding residues include S50 and K53. CTP contacts are provided by S50 and K53. D61, D63, and D112 together coordinate Mg(2+). The ATP site is built by H135, K155, and Y164. Residues H135, K155, and Y164 each coordinate CTP.

This sequence belongs to the tRNA nucleotidyltransferase/poly(A) polymerase family. Archaeal CCA-adding enzyme subfamily. In terms of assembly, homodimer. Mg(2+) serves as cofactor.

It carries out the reaction a tRNA precursor + 2 CTP + ATP = a tRNA with a 3' CCA end + 3 diphosphate. It catalyses the reaction a tRNA with a 3' CCA end + 2 CTP + ATP = a tRNA with a 3' CCACCA end + 3 diphosphate. In terms of biological role, catalyzes the addition and repair of the essential 3'-terminal CCA sequence in tRNAs without using a nucleic acid template. Adds these three nucleotides in the order of C, C, and A to the tRNA nucleotide-73, using CTP and ATP as substrates and producing inorganic pyrophosphate. tRNA 3'-terminal CCA addition is required both for tRNA processing and repair. Also involved in tRNA surveillance by mediating tandem CCA addition to generate a CCACCA at the 3' terminus of unstable tRNAs. While stable tRNAs receive only 3'-terminal CCA, unstable tRNAs are marked with CCACCA and rapidly degraded. This Thermoplasma acidophilum protein is CCA-adding enzyme.